A 320-amino-acid polypeptide reads, in one-letter code: Polycomb complex protein BMI-1-A (320 aa).

Residues C18–D57 form an RING-type zinc finger. The Nuclear localization signal signature appears at K81–R95. Residues I234–G320 form a disordered region. A compositionally biased stretch (low complexity) spans V262–P281. Positions H285–F304 are enriched in polar residues.

Component of a PRC1-like complex. Homodimer. Interacts with cbx2.

The protein localises to the nucleus. Component of a Polycomb group (PcG) multiprotein PRC1-like complex, a complex class required to maintain the transcriptionally repressive state of many genes, including Hox genes, throughout development. PcG PRC1 complex acts via chromatin remodeling and modification of histones; it mediates monoubiquitination of histone H2A 'Lys-119', rendering chromatin heritably changed in its expressibility. In the PRC1 complex, it is required to stimulate the E3 ubiquitin-protein ligase activity of rnf2. This Danio rerio (Zebrafish) protein is Polycomb complex protein BMI-1-A (bmi1a).